The chain runs to 335 residues: MGRLILEHTLQGHKGRIWGVAWHPKGNTFASCGEDKAIRIWSLSGNSWSTKTILSDGHKRTIREIRWSPCGQYLASASFDATTAIWSKSSGEFECNATLEGHENEVKSVSWSKSGGLLATCSRDKSVWIWEVAGDDEFECAAVLNPHTQDVKRVVWHPTKEILASASYDNTIKMFAESALDSDWDCTATLSSHTSTVWSIDFDADGERLVSCSDDTTLKIWRAYHPGNDAGVATPDKQTVWKCVCTLSGQHSRAIYDVSWCKLTGLIATACGDDGIRIFKESSDSKRDEPTFEQVTAEESAHEQDVNSVEWNPVMAGQLISCSDDGTIKIWKMLD.

WD repeat units lie at residues 12 to 51 (GHKG…WSTK), 57 to 96 (GHKR…FECN), 101 to 140 (GHEN…EFEC), 146 to 185 (PHTQ…SDWD), 192 to 231 (SHTS…NDAG), 250 to 289 (QHSR…KRDE), and 301 to 335 (AHEQ…KMLD).

Belongs to the WD repeat CIA1 family.

In terms of biological role, essential component of the cytosolic iron-sulfur (Fe/S) protein assembly machinery. Required for the maturation of extramitochondrial Fe/S proteins. This Drosophila willistoni (Fruit fly) protein is Probable cytosolic iron-sulfur protein assembly protein Ciao1.